The primary structure comprises 192 residues: Hydrophobin-like protein rodD (192 aa).

Disulfide bonds link cysteine 45–cysteine 106, cysteine 50–cysteine 99, and cysteine 107–cysteine 112.

It belongs to the fungal hydrophobin family. In terms of assembly, self-assembles to form functional amyloid fibrils called rodlets. Self-assembly into fibrillar rodlets occurs spontaneously at hydrophobic:hydrophilic interfaces and the rodlets further associate laterally to form amphipathic monolayers.

In terms of biological role, aerial growth, conidiation, and dispersal of filamentous fungi in the environment rely upon a capability of their secreting small amphipathic proteins called hydrophobins (HPBs) with low sequence identity. Class I can self-assemble into an outermost layer of rodlet bundles on aerial cell surfaces, conferring cellular hydrophobicity that supports fungal growth, development and dispersal; whereas Class II form highly ordered films at water-air interfaces through intermolecular interactions but contribute nothing to the rodlet structure. RodD is a an hydrophobin-like protein that, unlike rodA, is not required for rodlet formation. The polypeptide is Hydrophobin-like protein rodD (Aspergillus fumigatus (strain ATCC MYA-4609 / CBS 101355 / FGSC A1100 / Af293) (Neosartorya fumigata)).